The sequence spans 2298 residues: Non-reducing polyketide synthase pgmA (2298 aa).

The tract at residues 8-333 (LFIFGDQTLD…IYNVLKQSPL (326 aa)) is N-terminal acylcarrier protein transacylase domain (SAT). Residues 336–361 (YLSSKPAQSRQPVSNEGAPEPGNGRQ) are disordered. Positions 340-349 (KPAQSRQPVS) are enriched in polar residues. Positions 360 to 798 (RQKLAIIGMS…GGNSALLVED (439 aa)) constitute a Ketosynthase family 3 (KS3) domain. Catalysis depends on for beta-ketoacyl synthase activity residues Cys-532, His-667, and His-714. An acyl/malonyl transferases region spans residues 901 to 1193 (VFAFTGQGAH…GMVKGVLGPQ (293 aa)). Catalysis depends on Ser-994, which acts as the For acyl/malonyl transferase activity. An N-terminal hotdog fold region spans residues 1283–1415 (HRVVEETHDS…CVVRFRDRGL (133 aa)). A PKS/mFAS DH domain is found at 1283 to 1589 (HRVVEETHDS…IQGVPRRVLK (307 aa)). The segment at 1294 to 1586 (KTRIVIEADI…QISIQGVPRR (293 aa)) is product template (PT) domainn. His-1315 serves as the catalytic Proton acceptor; for dehydratase activity. Residues 1438–1589 (VTGETARFNR…IQGVPRRVLK (152 aa)) are C-terminal hotdog fold. Asp-1502 acts as the Proton donor; for dehydratase activity in catalysis. The interval 1619–1642 (YPVANGHAQATPTSGPVNGEPRPS) is disordered. The region spanning 1641-1716 (PSRFPRALEI…SLRALLSEPE (76 aa)) is the Carrier 1 domain. An O-(pantetheine 4'-phosphoryl)serine modification is found at Ser-1675. Residues 1716 to 1762 (ERSTNGMPAASAKDTSRFDEIPPMNGHKTNGHVMNGHSNGSSNGLPD) are disordered. Over residues 1751 to 1760 (GHSNGSSNGL) the composition is skewed to polar residues. The Carrier 2 domain occupies 1765–1840 (KVDFQRVLQI…DLKRYLFPQD (76 aa)). Ser-1799 is modified (O-(pantetheine 4'-phosphoryl)serine). The segment at 1927–2178 (VTGASGSLGG…YWTPVEEVAG (252 aa)) is reductase (R) domain.

The protein operates within pigment biosynthesis. It functions in the pathway secondary metabolite biosynthesis. In terms of biological role, non-reducing polyketide synthase; part of the gene cluster that mediates the biosynthesis of pleosporalin A, ascomycone A, as well as a third cryptic naphthoquinone derived pigment, all responsible for the coloration of conidia. The non-reducing polyketide synthase pgmA is responsible for the condensation of seven acetyl-CoA units to produce the cyclized heptaketide 3-acetonyl-1,6,8-trihydroxy-2-naphthaldehyde. The pathway begins with the biosynthesis of the cyclized heptaketide 3-acetonyl-1,6,8-trihydroxy-2-naphthaldehyde by the NR-PKS pgmA. The C-6 hydroxyl group is further methylated by the O-methyltransferase pgmB to yield fusarubinaldehyde which is in turn oxidized by the cytochrome P450 monooxygenase pgmC at C-9. The C-1 hydroxyl group is then methylated spontaneously. Although pgmE, pgmD and pgmH are essential for the production of pleosporalin A, it is not the case for the 2 other final products and it remains difficult to assign a specific function to each enzyme. PgmF and pgmG seem not to be involved in pigment biosynthesis although they were regulated by the cluster-specific transcription factor pgmR. The protein is Non-reducing polyketide synthase pgmA of Aspergillus terreus (strain NIH 2624 / FGSC A1156).